A 556-amino-acid polypeptide reads, in one-letter code: 2-succinyl-5-enolpyruvyl-6-hydroxy-3-cyclohexene-1-carboxylate synthase (556 aa).

It belongs to the TPP enzyme family. MenD subfamily. In terms of assembly, homodimer. It depends on Mg(2+) as a cofactor. The cofactor is Mn(2+). Requires thiamine diphosphate as cofactor.

It carries out the reaction isochorismate + 2-oxoglutarate + H(+) = 5-enolpyruvoyl-6-hydroxy-2-succinyl-cyclohex-3-ene-1-carboxylate + CO2. Its pathway is quinol/quinone metabolism; 1,4-dihydroxy-2-naphthoate biosynthesis; 1,4-dihydroxy-2-naphthoate from chorismate: step 2/7. It participates in quinol/quinone metabolism; menaquinone biosynthesis. Functionally, catalyzes the thiamine diphosphate-dependent decarboxylation of 2-oxoglutarate and the subsequent addition of the resulting succinic semialdehyde-thiamine pyrophosphate anion to isochorismate to yield 2-succinyl-5-enolpyruvyl-6-hydroxy-3-cyclohexene-1-carboxylate (SEPHCHC). This Shigella flexneri serotype 5b (strain 8401) protein is 2-succinyl-5-enolpyruvyl-6-hydroxy-3-cyclohexene-1-carboxylate synthase.